Consider the following 319-residue polypeptide: Na(+)-translocating NADH-quinone reductase subunit C (319 aa).

Residues 14–34 (WYVILFIFALSLFSSVFLSTV) traverse the membrane as a helical segment. At Thr-283 the chain carries FMN phosphoryl threonine.

Belongs to the NqrC family. Composed of six subunits; NqrA, NqrB, NqrC, NqrD, NqrE and NqrF. Requires FMN as cofactor.

It localises to the cell inner membrane. It carries out the reaction a ubiquinone + n Na(+)(in) + NADH + H(+) = a ubiquinol + n Na(+)(out) + NAD(+). In terms of biological role, NQR complex catalyzes the reduction of ubiquinone-1 to ubiquinol by two successive reactions, coupled with the transport of Na(+) ions from the cytoplasm to the periplasm. NqrA to NqrE are probably involved in the second step, the conversion of ubisemiquinone to ubiquinol. The polypeptide is Na(+)-translocating NADH-quinone reductase subunit C (Chlamydia caviae (strain ATCC VR-813 / DSM 19441 / 03DC25 / GPIC) (Chlamydophila caviae)).